A 238-amino-acid chain; its full sequence is Aspartate/glutamate leucyltransferase (238 aa).

This sequence belongs to the R-transferase family. Bpt subfamily.

Its subcellular location is the cytoplasm. The catalysed reaction is N-terminal L-glutamyl-[protein] + L-leucyl-tRNA(Leu) = N-terminal L-leucyl-L-glutamyl-[protein] + tRNA(Leu) + H(+). It carries out the reaction N-terminal L-aspartyl-[protein] + L-leucyl-tRNA(Leu) = N-terminal L-leucyl-L-aspartyl-[protein] + tRNA(Leu) + H(+). Its function is as follows. Functions in the N-end rule pathway of protein degradation where it conjugates Leu from its aminoacyl-tRNA to the N-termini of proteins containing an N-terminal aspartate or glutamate. This chain is Aspartate/glutamate leucyltransferase, found in Shewanella oneidensis (strain ATCC 700550 / JCM 31522 / CIP 106686 / LMG 19005 / NCIMB 14063 / MR-1).